Here is a 187-residue protein sequence, read N- to C-terminus: uncharacterized protein (187 aa).

This is an uncharacterized protein from Manihot esculenta (Cassava).